A 236-amino-acid chain; its full sequence is Phosphoribosylaminoimidazole-succinocarboxamide synthase (236 aa).

This sequence belongs to the SAICAR synthetase family.

The catalysed reaction is 5-amino-1-(5-phospho-D-ribosyl)imidazole-4-carboxylate + L-aspartate + ATP = (2S)-2-[5-amino-1-(5-phospho-beta-D-ribosyl)imidazole-4-carboxamido]succinate + ADP + phosphate + 2 H(+). The protein operates within purine metabolism; IMP biosynthesis via de novo pathway; 5-amino-1-(5-phospho-D-ribosyl)imidazole-4-carboxamide from 5-amino-1-(5-phospho-D-ribosyl)imidazole-4-carboxylate: step 1/2. This chain is Phosphoribosylaminoimidazole-succinocarboxamide synthase, found in Akkermansia muciniphila (strain ATCC BAA-835 / DSM 22959 / JCM 33894 / BCRC 81048 / CCUG 64013 / CIP 107961 / Muc).